The sequence spans 389 residues: Exodeoxyribonuclease 7 large subunit (389 aa).

Belongs to the XseA family. As to quaternary structure, heterooligomer composed of large and small subunits.

The protein resides in the cytoplasm. The catalysed reaction is Exonucleolytic cleavage in either 5'- to 3'- or 3'- to 5'-direction to yield nucleoside 5'-phosphates.. In terms of biological role, bidirectionally degrades single-stranded DNA into large acid-insoluble oligonucleotides, which are then degraded further into small acid-soluble oligonucleotides. This Pseudothermotoga lettingae (strain ATCC BAA-301 / DSM 14385 / NBRC 107922 / TMO) (Thermotoga lettingae) protein is Exodeoxyribonuclease 7 large subunit.